The sequence spans 500 residues: Endonuclease domain-containing 1 protein (500 aa).

The first 21 residues, 1 to 21 (MGTARWLALGSLFALAGLLEG), serve as a signal peptide directing secretion. Residues 293–323 (ERMVQSQKSSSPLSSTRSKRSTLLPPEASEG) are disordered. The span at 297–317 (QSQKSSSPLSSTRSKRSTLLP) shows a compositional bias: low complexity. Position 407 is an N6-acetyllysine (Lys-407).

The protein belongs to the DNA/RNA non-specific endonuclease family. In terms of assembly, interacts with RNF26; this interaction is important to modulate innate immune signaling through the cGAS-STING pathway.

Its subcellular location is the secreted. May act as a DNase and a RNase. Plays a role in the modulation of innate immune signaling through the cGAS-STING pathway by interacting with RNF26. The polypeptide is Endonuclease domain-containing 1 protein (ENDOD1) (Homo sapiens (Human)).